The following is a 275-amino-acid chain: MNFTDRATRVAIIANGKYQSKRVASKLFAAFKHDPDFYLSKKDPDIVISIGGDGMLLSAFHMYEKQLDKVRFVGVHTGHLGFYTDYRDFEVDTLINNLKNDEGEQISYPILKVTITLEDGRVIRARALNESTIKRIEKTMVADVVINQVVFERFRGDGILVSTPTGSTAYNKSLGGAVLHPTIEALQLTEISSLNNRVYRTLGSSVIIPKKDAIEIVPKRVGVYTISIDNKTVHYKNVTKIEYSIDEKSINFVSTPSHTSFWERVNDAFIGEPEH.

Asp-53 acts as the Proton acceptor in catalysis. NAD(+) contacts are provided by residues 53–54 (DG), 129–130 (NE), Arg-155, Asp-157, and 168–173 (TAYNKS).

This sequence belongs to the NAD kinase family. A divalent metal cation serves as cofactor.

Its subcellular location is the cytoplasm. It catalyses the reaction NAD(+) + ATP = ADP + NADP(+) + H(+). In terms of biological role, involved in the regulation of the intracellular balance of NAD and NADP, and is a key enzyme in the biosynthesis of NADP. Catalyzes specifically the phosphorylation on 2'-hydroxyl of the adenosine moiety of NAD to yield NADP. This chain is NAD kinase, found in Streptococcus agalactiae serotype Ia (strain ATCC 27591 / A909 / CDC SS700).